Consider the following 364-residue polypeptide: Peptide chain release factor 1 (364 aa).

An N5-methylglutamine modification is found at Q237.

Belongs to the prokaryotic/mitochondrial release factor family. In terms of processing, methylated by PrmC. Methylation increases the termination efficiency of RF1.

It localises to the cytoplasm. Functionally, peptide chain release factor 1 directs the termination of translation in response to the peptide chain termination codons UAG and UAA. The polypeptide is Peptide chain release factor 1 (Rubrobacter xylanophilus (strain DSM 9941 / JCM 11954 / NBRC 16129 / PRD-1)).